We begin with the raw amino-acid sequence, 87 residues long: Small ribosomal subunit protein bS20 (87 aa).

The disordered stretch occupies residues 1–20 (MANSAQARKRARTALKQRAH). Residues 7–19 (ARKRARTALKQRA) are compositionally biased toward basic residues.

It belongs to the bacterial ribosomal protein bS20 family.

In terms of biological role, binds directly to 16S ribosomal RNA. The sequence is that of Small ribosomal subunit protein bS20 from Chromobacterium violaceum (strain ATCC 12472 / DSM 30191 / JCM 1249 / CCUG 213 / NBRC 12614 / NCIMB 9131 / NCTC 9757 / MK).